A 479-amino-acid polypeptide reads, in one-letter code: MAEKSYQAGVKEYRKTYWTPEYVPLDTDLLAVFKIVAQAGVPREEAAAAVAAESSTGTWTTVWTDLLTDLDYYKGRAYRIEPVPGDDNAFYAFIAYPIDLFEEGSVVNVLTSLVGNVFGFKAVRSLRLEDIRFPLAYVKTCGGPPNGIQLERDRLNKYGRPLLGCTIKPKLGLSAKNYGRAVYECLRGGLDFTKDDENINSQPFMRWQHRFEFVMEAVHKATSETGERKGHYLNVTAPTPEEMYKRAEFAKSLGAPIIMHDFLTAGFTANTGLANWCRENGMLLHIHRAMHAVLDRNPMHGIHFRVLTKCLRLSGGDHLHSGTVVGKLEGDREATIGWVDLMREPFVPENRARGIFFDQDWGAMPGVMPVASGGIHVWHMPALTAIFGDDACFQFGGGTLGHPWGNAAGAHANRVALEACVEARNQGRPVEREGREILTEAAQHSPELKIAMETWKEIKFEFDVVDKLDTGPMLRVVNA.

Positions 116 and 166 each coordinate substrate. Lysine 168 acts as the Proton acceptor in catalysis. Substrate is bound at residue lysine 170. Residues lysine 194, aspartate 196, and glutamate 197 each coordinate Mg(2+). The residue at position 194 (lysine 194) is an N6-carboxylysine. Residue histidine 287 is the Proton acceptor of the active site. Substrate-binding residues include arginine 288, histidine 320, and serine 372.

This sequence belongs to the RuBisCO large chain family. Type I subfamily. Heterohexadecamer of 8 large chains and 8 small chains. Requires Mg(2+) as cofactor.

The enzyme catalyses 2 (2R)-3-phosphoglycerate + 2 H(+) = D-ribulose 1,5-bisphosphate + CO2 + H2O. It carries out the reaction D-ribulose 1,5-bisphosphate + O2 = 2-phosphoglycolate + (2R)-3-phosphoglycerate + 2 H(+). Its function is as follows. RuBisCO catalyzes two reactions: the carboxylation of D-ribulose 1,5-bisphosphate, the primary event in carbon dioxide fixation, as well as the oxidative fragmentation of the pentose substrate. Both reactions occur simultaneously and in competition at the same active site. This is Ribulose bisphosphate carboxylase large chain 2 from Bradyrhizobium sp. (strain ORS 278).